Reading from the N-terminus, the 161-residue chain is Nucleotide-binding protein SAR11_0692 (161 aa).

Belongs to the YajQ family.

Functionally, nucleotide-binding protein. This Pelagibacter ubique (strain HTCC1062) protein is Nucleotide-binding protein SAR11_0692.